Reading from the N-terminus, the 177-residue chain is Inorganic pyrophosphatase (177 aa).

Substrate-binding residues include K34, R48, and Y60. 3 residues coordinate Mg(2+): D70, D75, and D107. Y144 lines the substrate pocket.

This sequence belongs to the PPase family. Homohexamer. Mg(2+) is required as a cofactor.

Its subcellular location is the cytoplasm. The catalysed reaction is diphosphate + H2O = 2 phosphate + H(+). Catalyzes the hydrolysis of inorganic pyrophosphate (PPi) forming two phosphate ions. The sequence is that of Inorganic pyrophosphatase from Picrophilus torridus (strain ATCC 700027 / DSM 9790 / JCM 10055 / NBRC 100828 / KAW 2/3).